Here is a 590-residue protein sequence, read N- to C-terminus: Asparagine synthetase [glutamine-hydrolyzing] (590 aa).

The active-site For GATase activity is Cys2. The Glutamine amidotransferase type-2 domain occupies 2–185 (CGILAVLGCS…PGNLYSSRSG (184 aa)). L-glutamine contacts are provided by residues 50-54 (RLAII), 75-77 (NGE), and Asp98. The region spanning 193 to 516 (PQWYNETIPS…PQNSARFTVP (324 aa)) is the Asparagine synthetase domain. Residues Leu231, Val267, and 341 to 342 (SG) each bind ATP.

The enzyme catalyses L-aspartate + L-glutamine + ATP + H2O = L-asparagine + L-glutamate + AMP + diphosphate + H(+). It functions in the pathway amino-acid biosynthesis; L-asparagine biosynthesis; L-asparagine from L-aspartate (L-Gln route): step 1/1. This Asparagus officinalis (Garden asparagus) protein is Asparagine synthetase [glutamine-hydrolyzing].